The sequence spans 144 residues: Large ribosomal subunit protein uL16 (144 aa).

Belongs to the universal ribosomal protein uL16 family. As to quaternary structure, part of the 50S ribosomal subunit.

In terms of biological role, binds 23S rRNA and is also seen to make contacts with the A and possibly P site tRNAs. The chain is Large ribosomal subunit protein uL16 from Pediococcus pentosaceus (strain ATCC 25745 / CCUG 21536 / LMG 10740 / 183-1w).